The primary structure comprises 443 residues: Exodeoxyribonuclease 7 large subunit (443 aa).

It belongs to the XseA family. As to quaternary structure, heterooligomer composed of large and small subunits.

Its subcellular location is the cytoplasm. The catalysed reaction is Exonucleolytic cleavage in either 5'- to 3'- or 3'- to 5'-direction to yield nucleoside 5'-phosphates.. Functionally, bidirectionally degrades single-stranded DNA into large acid-insoluble oligonucleotides, which are then degraded further into small acid-soluble oligonucleotides. This Legionella pneumophila (strain Corby) protein is Exodeoxyribonuclease 7 large subunit.